We begin with the raw amino-acid sequence, 426 residues long: Proline--tRNA ligase (426 aa).

This sequence belongs to the class-II aminoacyl-tRNA synthetase family. ProS type 2 subfamily. As to quaternary structure, homodimer.

Its subcellular location is the cytoplasm. The catalysed reaction is tRNA(Pro) + L-proline + ATP = L-prolyl-tRNA(Pro) + AMP + diphosphate. In terms of biological role, catalyzes the attachment of proline to tRNA(Pro) in a two-step reaction: proline is first activated by ATP to form Pro-AMP and then transferred to the acceptor end of tRNA(Pro). The protein is Proline--tRNA ligase of Anaplasma phagocytophilum (strain HZ).